We begin with the raw amino-acid sequence, 155 residues long: Cytochrome c-type biogenesis protein CcmE (155 aa).

Residues 1-8 (MNPRRKKR) are Cytoplasmic-facing. Residues 9-29 (LLITSLLAVALSLAVGLVLFA) form a helical; Signal-anchor for type II membrane protein membrane-spanning segment. Residues 30-155 (LQQNIDLFYT…GMDNFKANNK (126 aa)) are Periplasmic-facing. Heme contacts are provided by His-131 and Tyr-135.

Belongs to the CcmE/CycJ family.

It is found in the cell inner membrane. In terms of biological role, heme chaperone required for the biogenesis of c-type cytochromes. Transiently binds heme delivered by CcmC and transfers the heme to apo-cytochromes in a process facilitated by CcmF and CcmH. In Psychromonas ingrahamii (strain DSM 17664 / CCUG 51855 / 37), this protein is Cytochrome c-type biogenesis protein CcmE.